The primary structure comprises 128 residues: Aspartate 1-decarboxylase (128 aa).

Catalysis depends on Ser-25, which acts as the Schiff-base intermediate with substrate; via pyruvic acid. Ser-25 is modified (pyruvic acid (Ser)). A substrate-binding site is contributed by Thr-57. The active-site Proton donor is Tyr-58. A substrate-binding site is contributed by 73–75 (GAA).

The protein belongs to the PanD family. In terms of assembly, heterooctamer of four alpha and four beta subunits. Pyruvate is required as a cofactor. Post-translationally, is synthesized initially as an inactive proenzyme, which is activated by self-cleavage at a specific serine bond to produce a beta-subunit with a hydroxyl group at its C-terminus and an alpha-subunit with a pyruvoyl group at its N-terminus.

Its subcellular location is the cytoplasm. The enzyme catalyses L-aspartate + H(+) = beta-alanine + CO2. It participates in cofactor biosynthesis; (R)-pantothenate biosynthesis; beta-alanine from L-aspartate: step 1/1. Catalyzes the pyruvoyl-dependent decarboxylation of aspartate to produce beta-alanine. The polypeptide is Aspartate 1-decarboxylase (Chlorobium phaeovibrioides (strain DSM 265 / 1930) (Prosthecochloris vibrioformis (strain DSM 265))).